The chain runs to 711 residues: Hepatocyte growth factor-like protein (711 aa).

The N-terminal stretch at 1-18 (MGWLPLLLLLTQCLGVPG) is a signal peptide. The PAN domain occupies 21–105 (SPLNDFQVLR…GRCDLFQKKD (85 aa)). 20 disulfide bridges follow: cysteine 56-cysteine 78, cysteine 60-cysteine 66, cysteine 110-cysteine 186, cysteine 131-cysteine 169, cysteine 157-cysteine 181, cysteine 191-cysteine 268, cysteine 194-cysteine 324, cysteine 212-cysteine 251, cysteine 240-cysteine 263, cysteine 283-cysteine 361, cysteine 304-cysteine 343, cysteine 332-cysteine 355, cysteine 370-cysteine 448, cysteine 391-cysteine 431, cysteine 419-cysteine 443, cysteine 468-cysteine 588, cysteine 507-cysteine 523, cysteine 602-cysteine 667, cysteine 632-cysteine 646, and cysteine 657-cysteine 685. A glycan (N-linked (GlcNAc...) asparagine) is linked at asparagine 72. 4 Kringle domains span residues 110–186 (CIMN…IKSC), 191–268 (CVWC…LPRC), 283–361 (CFRG…IRRC), and 370–448 (CYHG…LRRC). An N-linked (GlcNAc...) asparagine glycan is attached at asparagine 296. The 226-residue stretch at 484 to 709 (VVGGHPGNSP…FVDWIHKVMR (226 aa)) folds into the Peptidase S1 domain. Asparagine 615 carries N-linked (GlcNAc...) asparagine glycosylation.

The protein belongs to the peptidase S1 family. Plasminogen subfamily. In terms of assembly, dimer of an alpha chain and a beta chain linked by a disulfide bond. Interacts (via beta chain) with MST1R (via SEMA domain). Cleaved after Arg-483, probably by HPN/Hepsin, to yield the active form consisting of two disulfide-linked chains.

The protein localises to the secreted. This chain is Hepatocyte growth factor-like protein (MST1), found in Homo sapiens (Human).